The primary structure comprises 202 residues: Dephospho-CoA kinase (202 aa).

The DPCK domain occupies 6 to 202 (KISVTGDPSS…QCFKALKGTI (197 aa)). 14–19 (SSGKTE) contacts ATP.

Belongs to the CoaE family.

The protein localises to the cytoplasm. The enzyme catalyses 3'-dephospho-CoA + ATP = ADP + CoA + H(+). The protein operates within cofactor biosynthesis; coenzyme A biosynthesis; CoA from (R)-pantothenate: step 5/5. Functionally, catalyzes the phosphorylation of the 3'-hydroxyl group of dephosphocoenzyme A to form coenzyme A. This Chlamydia trachomatis serovar A (strain ATCC VR-571B / DSM 19440 / HAR-13) protein is Dephospho-CoA kinase.